The following is a 596-amino-acid chain: F-box/WD repeat-containing protein 8 (596 aa).

Met1 carries the N-acetylmethionine modification. A disordered region spans residues 21-95 (QVLRRRRRLE…PDRDAAEPEP (75 aa)). Residues 29–43 (LEAGERRPRRPEAGA) are compositionally biased toward basic and acidic residues. Low complexity predominate over residues 44–64 (RGEPASGYLGLAQGLLEGAGR). Over residues 71–91 (GRTDRKDVSSRSRSPPDRDAA) the composition is skewed to basic and acidic residues. Phosphoserine is present on residues Ser82 and Ser84. Residues 111-157 (PFFDVHLPYELAINIFQYLNRRELGLCAQVSKTWKVIAEDEVLWYRL) enclose the F-box domain. 8 WD repeats span residues 199 to 248 (AVSE…LESE), 257 to 297 (QPYV…FEHD), 298 to 338 (ARIQ…SEFE), 339 to 381 (VQKL…LHYV), 382 to 427 (YGQP…SKLG), 428 to 473 (NALG…SAHQ), 474 to 511 (LGVS…EVHS), and 512 to 559 (RHPV…AYEF).

In terms of assembly, component of the Cul7-RING(FBXW8) complex consisting of CUL7, RBX1, SKP1 and FBXW8; within the complex interacts with CUL7 and SKP1. Interacts with GLMN isoform 1. Interacts with OBSL1, CUL1, CUL2, CCT6B, PFDN5, CCT2, CCT3, CCT6A, CCT7, VBP1, CCDC8, ARF1, TRIP13, PDCD5 and GORASP1. Interacts with MAP4K1/HPK1 (when autophosphorylated). Associated component of the 3M complex. Interacts with POUF51 (when phosphorylated on 'Ser-347'). In terms of processing, phosphorylation at Ser-84 by mTORC2 promotes FBXW8 stabilization, allowing its translocation to the cytosol in response to insulin. Expressed in placenta and embryonic brain (at protein level).

The protein resides in the cytoplasm. It is found in the perinuclear region. It localises to the golgi apparatus. Its subcellular location is the cytosol. It functions in the pathway protein modification; protein ubiquitination. Substrate-recognition component of the Cul7-RING(FBXW8) ubiquitin ligase complex, which mediates the ubiquitination and subsequent proteasomal degradation of target proteins. The Cul7-RING(FBXW8) complex mediates ubiquitination and consequent degradation of GORASP1, acting as a component of the ubiquitin ligase pathway that regulates Golgi morphogenesis and dendrite patterning in brain. Mediates ubiquitination and degradation of IRS1 in a mTOR-dependent manner: the Cul7-RING(FBXW8) complex recognizes and binds IRS1 previously phosphorylated by S6 kinase (RPS6KB1 or RPS6KB2). The Cul7-RING(FBXW8) complex also mediates ubiquitination of MAP4K1/HPK1: recognizes and binds autophosphorylated MAP4K1/HPK1, leading to its degradation, thereby affecting cell proliferation and differentiation. The Cul7-RING(FBXW8) complex also mediates ubiquitination of phosphorylated cyclin-D1 (CCND1). The Cul7-RING(FBXW8) complex is however not a major regulator of CCND1 stability during the G1/S transition. Associated component of the 3M complex, suggesting that it mediates some of 3M complex functions. This chain is F-box/WD repeat-containing protein 8 (Fbxw8), found in Rattus norvegicus (Rat).